We begin with the raw amino-acid sequence, 251 residues long: Haloacid dehalogenase-like hydrolase domain-containing protein 3 (251 aa).

At lysine 15 the chain carries N6-acetyllysine; alternate. Lysine 15 is modified (N6-succinyllysine; alternate). Lysine 130 is modified (N6-acetyllysine).

Belongs to the HAD-like hydrolase superfamily.

The sequence is that of Haloacid dehalogenase-like hydrolase domain-containing protein 3 (Hdhd3) from Mus musculus (Mouse).